The sequence spans 752 residues: Endo-1,4-beta-xylanase 3 (752 aa).

The tract at residues 1–22 (MEKNTNTNHTSDDNNDKNHTNE) is disordered. Basic and acidic residues predominate over residues 10 to 22 (TSDDNNDKNHTNE). 2 CBM-cenC domains span residues 26 to 163 (KIIL…EGPP) and 197 to 344 (NIVE…VQGP). One can recognise a GH10 domain in the interval 397–692 (FPYIVKVKQT…NEAGKRFLEV (296 aa)). E526 serves as the catalytic Proton donor. E627 acts as the Nucleophile in catalysis.

It belongs to the glycosyl hydrolase 10 (cellulase F) family. Confined to immature xylems.

The enzyme catalyses Endohydrolysis of (1-&gt;4)-beta-D-xylosidic linkages in xylans.. Its pathway is glycan degradation; xylan degradation. In terms of biological role, binds to and hydrolyzes insoluble and soluble xylan substrates. This is Endo-1,4-beta-xylanase 3 from Arabidopsis thaliana (Mouse-ear cress).